Consider the following 738-residue polypeptide: Squalene hopane cyclase afumA (738 aa).

PFTB repeat units follow at residues 132-173 (GSQY…RIIG) and 321-361 (RRRC…KLHD). D460 acts as the Proton donor in catalysis. 3 PFTB repeats span residues 482–523 (VRDA…ESLC), 581–621 (CARA…QYFK), and 634–675 (AARA…SQTA).

This sequence belongs to the terpene cyclase/mutase family.

It functions in the pathway secondary metabolite biosynthesis. In terms of biological role, squalene hopane cyclase; part of the gene cluster that mediates the biosynthesis fumihopaside A, a hopane-type glucoside that enhances the thermotolerance and UV resistance of N.fumigata. The first step of fumihopaside A biosynthesis is performed by the squalene hopane cyclase afumA that catalyzes the cyclization of 3S-oxidosqualene into the hopene 21-beta-H-hopane-3-beta,22-diol. The cytochrome P450 monooxygenase afumB is responsible for both hydroxylation at C-24 and oxidations at C-30 of the afumA product. The glycosyltransferase afumC then catalyzes the glycosylation at C-24, using UDP-D-glucose as a donor, to produce fumihopaside A. AfumC is also able to accept UDP-D-galactose and UDP-D-glucuronic acid as donors to yield minor derivatives. Fumihopaside B, another minor derivative produced, is different from fumihopaside A due to the presence of a double bond between C-22 and C-29. In Aspergillus fumigatus (strain CBS 144.89 / FGSC A1163 / CEA10) (Neosartorya fumigata), this protein is Squalene hopane cyclase afumA.